A 23-amino-acid chain; its full sequence is Phallacidin proprotein 1 (23 aa).

A propeptide is located at residue P1. Residues 2-8 constitute a cross-link (cyclopeptide (Ala-Pro)); the sequence is AWLVDCP. Residues 3–7 constitute a cross-link (2'-cysteinyl-6'-hydroxytryptophan sulfoxide (Trp-Cys)); it reads WLVDC. Residues 9–23 constitute a propeptide that is removed on maturation; the sequence is CVGDDVNRLLTRGER.

Belongs to the MSDIN fungal toxin family. Post-translationally, processed by the macrocyclase-peptidase enzyme POPB to yield a toxic cyclic heptapeptide. POPB first removes 10 residues from the N-terminus. Conformational trapping of the remaining peptide forces the enzyme to release this intermediate rather than proceed to macrocyclization. The enzyme rebinds the remaining peptide in a different conformation and catalyzes macrocyclization of the N-terminal 7 residues.

Its function is as follows. Toxin that belongs to the bicyclic heptapeptides called phallotoxins. Although structurally related to amatoxins, phallotoxins have a different mode of action, which is the stabilization of F-actin. Phallotoxins are poisonous when administered parenterally, but not orally because of poor absorption. In Amanita exitialis (Guangzhou destroying angel), this protein is Phallacidin proprotein 1.